The sequence spans 305 residues: NAD kinase (305 aa).

Asp-82 (proton acceptor) is an active-site residue. NAD(+) is bound by residues 82–83, 156–157, Arg-184, Asp-186, 197–202, Ala-221, and Gln-255; these read DG, ND, and TAYALS.

This sequence belongs to the NAD kinase family. It depends on a divalent metal cation as a cofactor.

The protein resides in the cytoplasm. It carries out the reaction NAD(+) + ATP = ADP + NADP(+) + H(+). Functionally, involved in the regulation of the intracellular balance of NAD and NADP, and is a key enzyme in the biosynthesis of NADP. Catalyzes specifically the phosphorylation on 2'-hydroxyl of the adenosine moiety of NAD to yield NADP. This chain is NAD kinase, found in Cupriavidus pinatubonensis (strain JMP 134 / LMG 1197) (Cupriavidus necator (strain JMP 134)).